The sequence spans 305 residues: MSVLSPARLTHLQRLEAESIHILREVAAECENPVMLYSIGKDSAVMLHLAAKAFYPSRPPFPLLHVDTTWKFRAMYELRDKVASDLGFDLLVHKNPEAEARGINPFDHGSALHTDLWKTEGLKQALAKYGFDAAFGGARRDEEKSRAKERVFSFRTTEQRWDPKDQRPELWKLYNTRKHPGESLRVFPISNWTELDVWQYIHLENIPIVPLYFAAERPVVARDGSLIMVDDDRFRLRPGEVPQMKSVRFRTLGCYPLTGAVESTAATLPQVIQEMLLTTTSERQGRVIDHDQSASMEKKKQEGYF.

The tract at residues 283–305 (RQGRVIDHDQSASMEKKKQEGYF) is disordered.

Belongs to the PAPS reductase family. CysD subfamily. In terms of assembly, heterodimer composed of CysD, the smaller subunit, and CysN.

The enzyme catalyses sulfate + ATP + H(+) = adenosine 5'-phosphosulfate + diphosphate. The protein operates within sulfur metabolism; hydrogen sulfide biosynthesis; sulfite from sulfate: step 1/3. Its function is as follows. With CysN forms the ATP sulfurylase (ATPS) that catalyzes the adenylation of sulfate producing adenosine 5'-phosphosulfate (APS) and diphosphate, the first enzymatic step in sulfur assimilation pathway. APS synthesis involves the formation of a high-energy phosphoric-sulfuric acid anhydride bond driven by GTP hydrolysis by CysN coupled to ATP hydrolysis by CysD. In Caulobacter sp. (strain K31), this protein is Sulfate adenylyltransferase subunit 2.